Consider the following 178-residue polypeptide: Large ribosomal subunit protein uL6 (178 aa).

Belongs to the universal ribosomal protein uL6 family. As to quaternary structure, part of the 50S ribosomal subunit.

In terms of biological role, this protein binds to the 23S rRNA, and is important in its secondary structure. It is located near the subunit interface in the base of the L7/L12 stalk, and near the tRNA binding site of the peptidyltransferase center. In Streptococcus thermophilus (strain CNRZ 1066), this protein is Large ribosomal subunit protein uL6.